Here is a 352-residue protein sequence, read N- to C-terminus: UDP-N-acetylglucosamine--N-acetylmuramyl-(pentapeptide) pyrophosphoryl-undecaprenol N-acetylglucosamine transferase (352 aa).

The UDP-N-acetyl-alpha-D-glucosamine site is built by S195 and Q287.

It belongs to the glycosyltransferase 28 family. MurG subfamily.

The protein resides in the cell membrane. The catalysed reaction is Mur2Ac(oyl-L-Ala-gamma-D-Glu-L-Lys-D-Ala-D-Ala)-di-trans,octa-cis-undecaprenyl diphosphate + UDP-N-acetyl-alpha-D-glucosamine = beta-D-GlcNAc-(1-&gt;4)-Mur2Ac(oyl-L-Ala-gamma-D-Glu-L-Lys-D-Ala-D-Ala)-di-trans,octa-cis-undecaprenyl diphosphate + UDP + H(+). It participates in cell wall biogenesis; peptidoglycan biosynthesis. Its function is as follows. Cell wall formation. Catalyzes the transfer of a GlcNAc subunit on undecaprenyl-pyrophosphoryl-MurNAc-pentapeptide (lipid intermediate I) to form undecaprenyl-pyrophosphoryl-MurNAc-(pentapeptide)GlcNAc (lipid intermediate II). This Streptococcus pneumoniae serotype 4 (strain ATCC BAA-334 / TIGR4) protein is UDP-N-acetylglucosamine--N-acetylmuramyl-(pentapeptide) pyrophosphoryl-undecaprenol N-acetylglucosamine transferase.